A 189-amino-acid chain; its full sequence is UPF0398 protein LGAS_1023 (189 aa).

It belongs to the UPF0398 family.

This chain is UPF0398 protein LGAS_1023, found in Lactobacillus gasseri (strain ATCC 33323 / DSM 20243 / BCRC 14619 / CIP 102991 / JCM 1131 / KCTC 3163 / NCIMB 11718 / NCTC 13722 / AM63).